A 448-amino-acid chain; its full sequence is Cytoplasmic tRNA 2-thiolation protein 2 (448 aa).

The protein belongs to the CTU2/NCS2 family.

The protein localises to the cytoplasm. Its pathway is tRNA modification; 5-methoxycarbonylmethyl-2-thiouridine-tRNA biosynthesis. Plays a central role in 2-thiolation of mcm(5)S(2)U at tRNA wobble positions of tRNA(Lys), tRNA(Glu) and tRNA(Gln). May act by forming a heterodimer with NCS6 that ligates sulfur from thiocarboxylated URM1 onto the uridine of tRNAs at wobble position. Prior mcm(5) tRNA modification by the elongator complex is required for 2-thiolation. May also be involved in protein urmylation. The sequence is that of Cytoplasmic tRNA 2-thiolation protein 2 from Scheffersomyces stipitis (strain ATCC 58785 / CBS 6054 / NBRC 10063 / NRRL Y-11545) (Yeast).